Consider the following 950-residue polypeptide: Leucine--tRNA ligase (950 aa).

A 'HIGH' region motif is present at residues 42–52; the sequence is PYLNGNLHAGH. Residues 629–633 carry the 'KMSKS' region motif; it reads KMSKS. Lys632 lines the ATP pocket. The tract at residues 928-950 is disordered; that stretch reads NPPYDPKGRAQNAEPGRPAIYIE.

This sequence belongs to the class-I aminoacyl-tRNA synthetase family.

Its subcellular location is the cytoplasm. It carries out the reaction tRNA(Leu) + L-leucine + ATP = L-leucyl-tRNA(Leu) + AMP + diphosphate. This Methanothrix thermoacetophila (strain DSM 6194 / JCM 14653 / NBRC 101360 / PT) (Methanosaeta thermophila) protein is Leucine--tRNA ligase.